A 117-amino-acid chain; its full sequence is Shadow of prion protein (117 aa).

The signal sequence occupies residues 1-24 (MRQRVACCWVLLLLAATFCQPAAA). N-linked (GlcNAc...) asparagine glycosylation is present at Asn-87. Ala-104 carries GPI-anchor amidated alanine lipidation. Positions 105 to 117 (MPWLCPLAAILHH) are cleaved as a propeptide — removed in mature form.

The protein belongs to the SPRN family.

It is found in the cell membrane. Prion-like protein that has PrP(C)-like neuroprotective activity. This Gallus gallus (Chicken) protein is Shadow of prion protein (SPRN).